The sequence spans 626 residues: DNA-directed RNA polymerase subunit gamma (626 aa).

Positions 71, 73, 86, and 89 each coordinate Zn(2+). The Mg(2+) site is built by D467, D469, and D471.

The protein belongs to the RNA polymerase beta' chain family. RpoC1 subfamily. As to quaternary structure, in cyanobacteria the RNAP catalytic core is composed of 2 alpha, 1 beta, 1 beta', 1 gamma and 1 omega subunit. When a sigma factor is associated with the core the holoenzyme is formed, which can initiate transcription. Mg(2+) is required as a cofactor. It depends on Zn(2+) as a cofactor.

It carries out the reaction RNA(n) + a ribonucleoside 5'-triphosphate = RNA(n+1) + diphosphate. DNA-dependent RNA polymerase catalyzes the transcription of DNA into RNA using the four ribonucleoside triphosphates as substrates. This is DNA-directed RNA polymerase subunit gamma from Synechocystis sp. (strain ATCC 27184 / PCC 6803 / Kazusa).